Consider the following 305-residue polypeptide: MKKWFSSISKKKVSFSTLLLLGSGIVLSSCSNIDKPNVFRTLSQQSVENKVDYSKLPKENKTVRNLVFGTAEYNDGNYVLVVTTETDSSQINFLNGSNNQAVSTENWAGDLGTTVKQVQNRYSTYPKGVKFLIWNDIDPNPVKWNPFARYPVIASDNELAKQTDKDNSDKLRRNDESAIQYREIVTFIQTVYSGSVNNLINQSNVHAQTVGTDVTKAIVIAFRKNNLDQISAHFYNPDNSNGSNAPGSNQPNQDSGNNGSTTPAAPAAAAAKKSYSAGSFGVKRHAVQVSINFLNFLDSVYTPLN.

The N-terminal stretch at 1-29 (MKKWFSSISKKKVSFSTLLLLGSGIVLSS) is a signal peptide. Cys30 is lipidated: N-palmitoyl cysteine. Residue Cys30 is the site of S-diacylglycerol cysteine attachment. The segment at 234–265 (FYNPDNSNGSNAPGSNQPNQDSGNNGSTTPAA) is disordered. Polar residues predominate over residues 237–258 (PDNSNGSNAPGSNQPNQDSGNN).

It is found in the cell membrane. This is an uncharacterized protein from Mycoplasma pneumoniae (strain ATCC 29342 / M129 / Subtype 1) (Mycoplasmoides pneumoniae).